We begin with the raw amino-acid sequence, 134 residues long: U-scoloptoxin(05)-Er2a (134 aa).

The signal sequence occupies residues 1 to 19; the sequence is MTFVVAAVVLLTVVPLATP.

This sequence belongs to the scoloptoxin-05 family. In terms of processing, contains 5 disulfide bonds. Expressed by the venom gland.

Its subcellular location is the secreted. In Ethmostigmus rubripes (Giant centipede), this protein is U-scoloptoxin(05)-Er2a.